A 319-amino-acid chain; its full sequence is Cutinase cut1 (319 aa).

The first 58 residues, 1-58 (MPPHAARPGPAQNRRGRAMAVITPRRERSSLLSRALRFTAAAATALVTAVSLAAPAHA), serve as a signal peptide directing secretion. A poly(ethylene terephthalate)-binding site is contributed by Tyr118. The active-site Nucleophile is the Ser188. 2 residues coordinate poly(ethylene terephthalate): Met189 and Trp213. Residues Asp234 and His266 each act as charge relay system in the active site. Cys299 and Cys317 are joined by a disulfide.

It belongs to the AB hydrolase superfamily.

The protein resides in the secreted. Its subcellular location is the periplasm. The catalysed reaction is an acetyl ester + H2O = an aliphatic alcohol + acetate + H(+). It catalyses the reaction a butanoate ester + H2O = an aliphatic alcohol + butanoate + H(+). The enzyme catalyses pentanoate ester + H2O = pentanoate + an aliphatic alcohol + H(+). It carries out the reaction an octanoate ester + H2O = an aliphatic alcohol + octanoate + H(+). The catalysed reaction is decanoate ester + H2O = decanoate + an aliphatic alcohol + H(+). It catalyses the reaction a dodecanoate ester + H2O = an aliphatic alcohol + dodecanoate + H(+). The enzyme catalyses a tetradecanoate ester + H2O = an aliphatic alcohol + tetradecanoate + H(+). It carries out the reaction hexadecanoate ester + H2O = an aliphatic alcohol + hexadecanoate + H(+). The catalysed reaction is cutin + H2O = cutin monomers.. It catalyses the reaction (ethylene terephthalate)(n) + H2O = (ethylene terephthalate)(n-1) + 4-[(2-hydroxyethoxy)carbonyl]benzoate + H(+). Activated by magnesium ions. Activated by calcium ions. Functionally, catalyzes the hydrolysis of cutin, a polyester that forms the structure of plant cuticle. Shows esterase activity towards p-nitrophenol-linked aliphatic esters (pNP-aliphatic esters). Capable of degrading the plastic poly(ethylene terephthalate) (PET), the most abundant polyester plastic in the world. This chain is Cutinase cut1, found in Thermobifida fusca (Thermomonospora fusca).